A 68-amino-acid chain; its full sequence is Conotoxin Ar5.3 (68 aa).

A signal peptide spans 1-19 (MLCLPVFIILLLLASPAAS). The propeptide occupies 20–53 (NPLEKRIQNDLIRAALEDADMENDPRSIIDSVKT).

This sequence belongs to the conotoxin T superfamily. In terms of processing, contains 2 disulfide bonds that can be either 'C1-C3, C2-C4' or 'C1-C4, C2-C3', since these disulfide connectivities have been observed for conotoxins with cysteine framework V (for examples, see AC P0DQQ7 and AC P81755). In terms of tissue distribution, expressed by the venom duct.

The protein localises to the secreted. The sequence is that of Conotoxin Ar5.3 from Conus arenatus (Sand-dusted cone).